Consider the following 453-residue polypeptide: tRNA-2-methylthio-N(6)-dimethylallyladenosine synthase (453 aa).

An MTTase N-terminal domain is found at 21 to 137 (RGVYISTYGC…LPQLVAKSFA (117 aa)). [4Fe-4S] cluster is bound by residues Cys-30, Cys-66, Cys-100, Cys-174, Cys-178, and Cys-181. Positions 160–389 (RNPGVATYVN…FDVHEAMAFE (230 aa)) constitute a Radical SAM core domain. The 62-residue stretch at 392–453 (KRYEGTTMKV…FPAVFRGEMI (62 aa)) folds into the TRAM domain.

This sequence belongs to the methylthiotransferase family. MiaB subfamily. As to quaternary structure, monomer. The cofactor is [4Fe-4S] cluster.

The protein localises to the cytoplasm. It catalyses the reaction N(6)-dimethylallyladenosine(37) in tRNA + (sulfur carrier)-SH + AH2 + 2 S-adenosyl-L-methionine = 2-methylsulfanyl-N(6)-dimethylallyladenosine(37) in tRNA + (sulfur carrier)-H + 5'-deoxyadenosine + L-methionine + A + S-adenosyl-L-homocysteine + 2 H(+). Catalyzes the methylthiolation of N6-(dimethylallyl)adenosine (i(6)A), leading to the formation of 2-methylthio-N6-(dimethylallyl)adenosine (ms(2)i(6)A) at position 37 in tRNAs that read codons beginning with uridine. This Bdellovibrio bacteriovorus (strain ATCC 15356 / DSM 50701 / NCIMB 9529 / HD100) protein is tRNA-2-methylthio-N(6)-dimethylallyladenosine synthase.